A 133-amino-acid polypeptide reads, in one-letter code: Large ribosomal subunit protein bL17 (133 aa).

This sequence belongs to the bacterial ribosomal protein bL17 family. In terms of assembly, part of the 50S ribosomal subunit. Contacts protein L32.

The polypeptide is Large ribosomal subunit protein bL17 (Nitratidesulfovibrio vulgaris (strain DSM 19637 / Miyazaki F) (Desulfovibrio vulgaris)).